Reading from the N-terminus, the 221-residue chain is Adenylate kinase (221 aa).

Position 10-15 (Gly-10–Thr-15) interacts with ATP. Residues Ser-30–Val-59 form an NMP region. Residues Thr-31, Arg-36, Gly-57 to Val-59, Gly-85 to Arg-88, and Gln-92 contribute to the AMP site. The interval Gly-122 to Asp-159 is LID. ATP is bound by residues Arg-123 and Thr-132–Tyr-133. Positions 156 and 167 each coordinate AMP. Gly-207 is a binding site for ATP.

This sequence belongs to the adenylate kinase family. In terms of assembly, monomer.

Its subcellular location is the cytoplasm. It catalyses the reaction AMP + ATP = 2 ADP. It functions in the pathway purine metabolism; AMP biosynthesis via salvage pathway; AMP from ADP: step 1/1. Functionally, catalyzes the reversible transfer of the terminal phosphate group between ATP and AMP. Plays an important role in cellular energy homeostasis and in adenine nucleotide metabolism. The polypeptide is Adenylate kinase (Cupriavidus necator (strain ATCC 17699 / DSM 428 / KCTC 22496 / NCIMB 10442 / H16 / Stanier 337) (Ralstonia eutropha)).